The chain runs to 73 residues: MKADIHPVYEAIDATCSCGNVIKTRSTLAAPLSLDVCNECHPFYTGKQKTLDVGGRVDKFKSRFGAFGATKAK.

Residues cysteine 16, cysteine 18, cysteine 37, and cysteine 40 each coordinate Zn(2+).

The protein belongs to the bacterial ribosomal protein bL31 family. Type A subfamily. As to quaternary structure, part of the 50S ribosomal subunit. It depends on Zn(2+) as a cofactor.

Its function is as follows. Binds the 23S rRNA. This is Large ribosomal subunit protein bL31 from Pseudomonas savastanoi pv. phaseolicola (strain 1448A / Race 6) (Pseudomonas syringae pv. phaseolicola (strain 1448A / Race 6)).